The sequence spans 118 residues: NADH-quinone oxidoreductase subunit A (118 aa).

3 helical membrane-spanning segments follow: residues 5–25 (YLGISLFLAAGLIIPFLAFAV), 61–81 (FLYALVFVAFDVETVFLYPWA), and 90–110 (FAIVEMFIFITILVVGFWYAW).

Belongs to the complex I subunit 3 family. NDH-1 is composed of 14 different subunits. Subunits NuoA, H, J, K, L, M, N constitute the membrane sector of the complex.

It is found in the cell membrane. It catalyses the reaction a quinone + NADH + 5 H(+)(in) = a quinol + NAD(+) + 4 H(+)(out). NDH-1 shuttles electrons from NADH, via FMN and iron-sulfur (Fe-S) centers, to quinones in the respiratory chain. The immediate electron acceptor for the enzyme in this species is believed to be a menaquinone. Couples the redox reaction to proton translocation (for every two electrons transferred, four hydrogen ions are translocated across the cytoplasmic membrane), and thus conserves the redox energy in a proton gradient. This chain is NADH-quinone oxidoreductase subunit A, found in Heliobacterium modesticaldum (strain ATCC 51547 / Ice1).